Here is a 981-residue protein sequence, read N- to C-terminus: Lateral signaling target protein 2 homolog (981 aa).

Residues 308–462 are disordered; sequence PLGSSSIEAP…LESSDDDTDE (155 aa). Low complexity-rich tracts occupy residues 326–356, 369–380, 390–404, and 412–433; these read TTSS…TTNT, NNHNSNSNSSTN, SPSM…TPTA, and PSHS…PADW. Positions 434–462 are enriched in acidic residues; the sequence is SDGDDEDEDDDDIEVDEEDLESSDDDTDE. 2 positions are modified to phosphoserine: Ser-544 and Ser-545. 2 disordered regions span residues 561-642 and 749-897; these read EQMQ…SSLS and DNVF…SPPA. The segment covering 576–611 has biased composition (basic residues); the sequence is HSHRHHQRHHHHHHHRHSHQHRQPHPHRTTRSGRKR. Residues 630–642 are compositionally biased toward low complexity; it reads LASGDTSAASSLS. The span at 760 to 791 shows a compositional bias: polar residues; sequence ATGQRHSAGASMQRNNTIDLASQSGEGSPSGA. Ser-805 is modified (phosphoserine). 2 stretches are compositionally biased toward low complexity: residues 811–866 and 883–896; these read AASS…PVSA and PSSA…LSPP. An FYVE-type zinc finger spans residues 901–961; that stretch reads DGKAPRCMAC…VCRDCYVREV (61 aa). Zn(2+)-binding residues include Cys-907, Cys-910, Cys-923, Cys-926, Cys-931, Cys-934, Cys-953, and Cys-956.

This sequence belongs to the lst-2 family.

In terms of biological role, negative regulator of epidermal growth factor receptor (EGFR) signaling. The protein is Lateral signaling target protein 2 homolog of Drosophila erecta (Fruit fly).